Reading from the N-terminus, the 419-residue chain is Serine--tRNA ligase (419 aa).

226 to 228 contributes to the L-serine binding site; sequence TSE. Residues 257-259 and Val273 contribute to the ATP site; that span reads RRE. Glu280 is an L-serine binding site. 344–347 provides a ligand contact to ATP; that stretch reads ELTS. An L-serine-binding site is contributed by Thr379.

This sequence belongs to the class-II aminoacyl-tRNA synthetase family. Type-1 seryl-tRNA synthetase subfamily. As to quaternary structure, homodimer. The tRNA molecule binds across the dimer.

The protein resides in the cytoplasm. The enzyme catalyses tRNA(Ser) + L-serine + ATP = L-seryl-tRNA(Ser) + AMP + diphosphate + H(+). The catalysed reaction is tRNA(Sec) + L-serine + ATP = L-seryl-tRNA(Sec) + AMP + diphosphate + H(+). Its pathway is aminoacyl-tRNA biosynthesis; selenocysteinyl-tRNA(Sec) biosynthesis; L-seryl-tRNA(Sec) from L-serine and tRNA(Sec): step 1/1. Functionally, catalyzes the attachment of serine to tRNA(Ser). Is also able to aminoacylate tRNA(Sec) with serine, to form the misacylated tRNA L-seryl-tRNA(Sec), which will be further converted into selenocysteinyl-tRNA(Sec). This Corynebacterium efficiens (strain DSM 44549 / YS-314 / AJ 12310 / JCM 11189 / NBRC 100395) protein is Serine--tRNA ligase.